The following is a 158-amino-acid chain: 2-C-methyl-D-erythritol 2,4-cyclodiphosphate synthase (158 aa).

Asp9 and His11 together coordinate a divalent metal cation. 4-CDP-2-C-methyl-D-erythritol 2-phosphate is bound by residues 9–11 (DVH) and 35–36 (HS). Residue His43 coordinates a divalent metal cation. Residues 57-59 (DIG), 62-66 (FPDTD), 133-136 (TTTE), Phe140, and Arg143 each bind 4-CDP-2-C-methyl-D-erythritol 2-phosphate.

Belongs to the IspF family. As to quaternary structure, homotrimer. Requires a divalent metal cation as cofactor.

It carries out the reaction 4-CDP-2-C-methyl-D-erythritol 2-phosphate = 2-C-methyl-D-erythritol 2,4-cyclic diphosphate + CMP. It participates in isoprenoid biosynthesis; isopentenyl diphosphate biosynthesis via DXP pathway; isopentenyl diphosphate from 1-deoxy-D-xylulose 5-phosphate: step 4/6. Its function is as follows. Involved in the biosynthesis of isopentenyl diphosphate (IPP) and dimethylallyl diphosphate (DMAPP), two major building blocks of isoprenoid compounds. Catalyzes the conversion of 4-diphosphocytidyl-2-C-methyl-D-erythritol 2-phosphate (CDP-ME2P) to 2-C-methyl-D-erythritol 2,4-cyclodiphosphate (ME-CPP) with a corresponding release of cytidine 5-monophosphate (CMP). This chain is 2-C-methyl-D-erythritol 2,4-cyclodiphosphate synthase, found in Haemophilus influenzae (strain 86-028NP).